The sequence spans 149 residues: UPF0178 protein Psyc_0274 (149 aa).

This sequence belongs to the UPF0178 family.

This Psychrobacter arcticus (strain DSM 17307 / VKM B-2377 / 273-4) protein is UPF0178 protein Psyc_0274.